Here is a 431-residue protein sequence, read N- to C-terminus: Cleavage stimulation factor subunit 1 (431 aa).

The tract at residues 14-35 is hydrophobic; that stretch reads LYKLIISQLLYDGYISIANGLI. 6 WD repeats span residues 106 to 145, 171 to 210, 215 to 254, 260 to 301, 303 to 343, and 395 to 430; these read SHKG…AKSA, DHVD…AKRA, QEAE…CFVS, QHTD…TTFE, AHDG…TLVR, and GHNN…RSTT.

In terms of assembly, homodimer. The CSTF complex is composed of CSTF1 (50 kDa subunit), CSTF2 (64 kDa subunit) and CSTF3 (77 kDa subunit). Interacts (via repeats WD) directly with CSTF3. Interacts (via repeat WD6) with BARD1. Interacts with ERCC6. Post-translationally, the N-terminus is blocked.

The protein localises to the nucleus. Functionally, one of the multiple factors required for polyadenylation and 3'-end cleavage of mammalian pre-mRNAs. May be responsible for the interaction of CSTF with other factors to form a stable complex on the pre-mRNA. The sequence is that of Cleavage stimulation factor subunit 1 (CSTF1) from Homo sapiens (Human).